A 231-amino-acid polypeptide reads, in one-letter code: Proteasome subunit alpha type-2 (231 aa).

It belongs to the peptidase T1A family. The 26S proteasome consists of a 20S proteasome core and two 19S regulatory subunits. The 20S proteasome core is composed of 28 subunits that are arranged in four stacked rings, resulting in a barrel-shaped structure. The two end rings are each formed by seven alpha subunits, and the two central rings are each formed by seven beta subunits. The catalytic chamber with the active sites is on the inside of the barrel.

The protein resides in the cytoplasm. The protein localises to the nucleus. The proteasome is a multicatalytic proteinase complex which is characterized by its ability to cleave peptides with Arg, Phe, Tyr, Leu, and Glu adjacent to the leaving group at neutral or slightly basic pH. The proteasome has an ATP-dependent proteolytic activity. The protein is Proteasome subunit alpha type-2 (pas-2) of Caenorhabditis elegans.